Consider the following 495-residue polypeptide: Guanosine-5'-triphosphate,3'-diphosphate pyrophosphatase (495 aa).

This sequence belongs to the GppA/Ppx family. GppA subfamily.

It catalyses the reaction guanosine 3'-diphosphate 5'-triphosphate + H2O = guanosine 3',5'-bis(diphosphate) + phosphate + H(+). The protein operates within purine metabolism; ppGpp biosynthesis; ppGpp from GTP: step 2/2. In terms of biological role, catalyzes the conversion of pppGpp to ppGpp. Guanosine pentaphosphate (pppGpp) is a cytoplasmic signaling molecule which together with ppGpp controls the 'stringent response', an adaptive process that allows bacteria to respond to amino acid starvation, resulting in the coordinated regulation of numerous cellular activities. The polypeptide is Guanosine-5'-triphosphate,3'-diphosphate pyrophosphatase (Enterobacter sp. (strain 638)).